Reading from the N-terminus, the 119-residue chain is Protein TusC (119 aa).

This sequence belongs to the DsrF/TusC family. Heterohexamer, formed by a dimer of trimers. The hexameric TusBCD complex contains 2 copies each of TusB, TusC and TusD. The TusBCD complex interacts with TusE.

Its subcellular location is the cytoplasm. Part of a sulfur-relay system required for 2-thiolation of 5-methylaminomethyl-2-thiouridine (mnm(5)s(2)U) at tRNA wobble positions. The protein is Protein TusC of Shigella boydii serotype 18 (strain CDC 3083-94 / BS512).